The sequence spans 246 residues: Pyridoxine 5'-phosphate synthase (246 aa).

N12 serves as a coordination point for 3-amino-2-oxopropyl phosphate. 14-15 (DH) is a binding site for 1-deoxy-D-xylulose 5-phosphate. R23 contacts 3-amino-2-oxopropyl phosphate. Residue H48 is the Proton acceptor of the active site. The 1-deoxy-D-xylulose 5-phosphate site is built by R50 and H55. Catalysis depends on E75, which acts as the Proton acceptor. 1-deoxy-D-xylulose 5-phosphate is bound at residue T105. The active-site Proton donor is the H196. 3-amino-2-oxopropyl phosphate is bound by residues G197 and 218–219 (GH).

Belongs to the PNP synthase family. As to quaternary structure, homooctamer; tetramer of dimers.

It localises to the cytoplasm. The catalysed reaction is 3-amino-2-oxopropyl phosphate + 1-deoxy-D-xylulose 5-phosphate = pyridoxine 5'-phosphate + phosphate + 2 H2O + H(+). Its pathway is cofactor biosynthesis; pyridoxine 5'-phosphate biosynthesis; pyridoxine 5'-phosphate from D-erythrose 4-phosphate: step 5/5. In terms of biological role, catalyzes the complicated ring closure reaction between the two acyclic compounds 1-deoxy-D-xylulose-5-phosphate (DXP) and 3-amino-2-oxopropyl phosphate (1-amino-acetone-3-phosphate or AAP) to form pyridoxine 5'-phosphate (PNP) and inorganic phosphate. The chain is Pyridoxine 5'-phosphate synthase from Thiobacillus denitrificans (strain ATCC 25259 / T1).